The sequence spans 539 residues: GMP synthase [glutamine-hydrolyzing] (539 aa).

The region spanning 4-202 (KILILDFGSQ…VLQIAGAKPD (199 aa)) is the Glutamine amidotransferase type-1 domain. The active-site Nucleophile is cysteine 81. Residues histidine 176 and glutamate 178 contribute to the active site. In terms of domain architecture, GMPS ATP-PPase spans 203 to 395 (WIMSNHIEEA…LGLPPEMVYR (193 aa)). 230–236 (SGGVDSS) contributes to the ATP binding site.

In terms of assembly, homodimer.

The catalysed reaction is XMP + L-glutamine + ATP + H2O = GMP + L-glutamate + AMP + diphosphate + 2 H(+). The protein operates within purine metabolism; GMP biosynthesis; GMP from XMP (L-Gln route): step 1/1. Its function is as follows. Catalyzes the synthesis of GMP from XMP. This is GMP synthase [glutamine-hydrolyzing] from Burkholderia ambifaria (strain ATCC BAA-244 / DSM 16087 / CCUG 44356 / LMG 19182 / AMMD) (Burkholderia cepacia (strain AMMD)).